A 222-amino-acid chain; its full sequence is MSLTKRLLHIHPRCSFSKRSHPSADRNSQPISEALLSQVDKTTENLQLLEIASGSGQHAGFLAPLLPNITFQPTEYERNQFGSIAAYAGDCPTRNIRPPFHVDITRDPGDWEAPPAPASYDYMFNSNMMHISPWSCSIGLFRAAGQLLKKGGRMFTYGPYAQDGILVPQSNVDFDRSLRQRDASWGVRDIKDLKVLAAENGLQLEKLVKMPSNNKFLTWLKL.

The protein belongs to the UPF0585 family.

The polypeptide is UPF0585 protein CG18661 (Drosophila melanogaster (Fruit fly)).